The chain runs to 541 residues: MSSNSDTGDLQESLKHGLTPIGAGLPDRHGSPIPARGRLVMLPKVETEALGLARSHGEQGQMPENMQVSQFKMVNYSYDEDLEELCPVCGDKVSGYHYGLLTCESCKGFFKRTVQNNKRYTCIENQNCQIDKTQRKRCPYCRFQKCLSVGMKLEAVRADRMRGGRNKFGPMYKRDRALKQQKKALIRANGLKLEAMSQVIQAMPSDLTISSAIQNIHSASKGLPLNHAALPPTDYDRSPFVTSPISMTMPPHGSLQGYQTYGHFPSRAIKSEYPDPYTSSPESIMGYSYMDSYQTSSPASIPHLILELLKCEPDEPQVQAKIMAYLQQEQANRSKHEKLSTFGLMCKMADQTLFSIVEWARSSIFFRELKVDDQMKLLQNCWSELLILDHIYRQVVHGKEGSIFLVTGQQVDYSIIASQAGATLNNLMSHAQELVAKLRSLQFDQREFVCLKFLVLFSLDVKNLENFQLVEGVQEQVNAALLDYTMCNYPQQTEKFGQLLLRLPEIRAISMQAEEYLYYKHLNGDVPYNNLLIEMLHAKRA.

The span at 1–10 (MSSNSDTGDL) shows a compositional bias: polar residues. Positions 1–35 (MSSNSDTGDLQESLKHGLTPIGAGLPDRHGSPIPA) are disordered. A DNA-binding region (nuclear receptor) is located at residues 83–154 (EELCPVCGDK…KCLSVGMKLE (72 aa)). 8 residues coordinate Zn(2+): cysteine 86, cysteine 89, cysteine 103, cysteine 106, cysteine 122, cysteine 128, cysteine 138, and cysteine 141. 2 consecutive NR C4-type zinc fingers follow at residues 86–106 (CPVC…CESC) and 122–146 (CIEN…FQKC). The C-terminal extension (CTE) stretch occupies residues 152–167 (KLEAVRADRMRGGRNK). Residues 168-187 (FGPMYKRDRALKQQKKALIR) carry the FTZ-F1 box motif. Lysine 270 is covalently cross-linked (Glycyl lysine isopeptide (Lys-Gly) (interchain with G-Cter in SUMO1)). One can recognise an NR LBD domain in the interval 300–539 (SIPHLILELL…NLLIEMLHAK (240 aa)). A phospholipid derivative is bound by residues 421 to 424 (GATL), tyrosine 516, and lysine 520. Residues 528-539 (YNNLLIEMLHAK) are AF-2.

This sequence belongs to the nuclear hormone receptor family. NR5 subfamily. Monomer; Binds DNA as a monomer. Interacts with nuclear receptor corepressors NR0B1 and NR0B2; repressing NR5A2 nuclear receptor activity. Interacts with nuclear receptor coactivators CTNNB1, PPARGC1A and NCOA2; interaction takes place following ligand-binding and promotes target gene activation. Interacts (when sumoylated) with GPS2; interaction with GPS2 onto hepatic acute phase protein promoters prevents N-Cor corepressor complex dissociation. Interacts with HNF1A. Interacts with GRIP1. In terms of processing, sumoylated by SUMO1 at Lys-270 during the hepatic acute phase response, leading to promote interaction with GPS2 and prevent N-Cor corepressor complex dissociation. In terms of tissue distribution, abundantly expressed in pancreas, less in liver, very low levels in heart and lung. Expressed in the Hep-G2 cell line. Isoform 1 and isoform 2 seem to be present in fetal and adult liver and Hep-G2 cells.

Its subcellular location is the nucleus. It localises to the chromosome. Activated by synthetic agonists RR-RJW100, SR-RJW100, endo sulfamide compound 6N and GSK8470. Functionally, orphan nuclear receptor that binds DNA as a monomer to the 5'-TCAAGGCCA-3' sequence and controls expression of target genes: regulates key biological processes, such as early embryonic development, cholesterol and bile acid synthesis pathways, as well as liver and pancreas morphogenesis. Ligand-binding causes conformational change which causes recruitment of coactivators, promoting target gene activation. The specific ligand is unknown, but specific phospholipids, such as phosphatidylethanolamine, phosphatidylserine, dilauroyl phosphatidylcholine and diundecanoyl phosphatidylcholine can act as ligand in vitro. Acts as a pioneer transcription factor, which unwraps target DNA from histones and elicits local opening of closed chromatin. Plays a central role during preimplantation stages of embryonic development. Plays a minor role in zygotic genome activation (ZGA) by regulating a small set of two-cell stage genes. Plays a major role in morula development (2-16 cells embryos) by acting as a master regulator at the 8-cell stage, controlling expression of lineage-specifying transcription factors and genes involved in mitosis, telomere maintenance and DNA repair. Zygotic NR5A2 binds to both closed and open chromatin with other transcription factors, often at SINE B1/Alu repeats DNA elements, promoting chromatin accessibility at nearby regulatory regions. Also involved in the epiblast stage of development and embryonic stem cell pluripotency, by promoting expression of POU5F1/OCT4. Regulates other processes later in development, such as formation of connective tissue in lower jaw and middle ear, neural stem cell differentiation, ovarian follicle development and Sertoli cell differentiation. Involved in exocrine pancreas development and acinar cell differentiation. Acts as an essential transcriptional regulator of lipid metabolism. Key regulator of cholesterol 7-alpha-hydroxylase gene (CYP7A) expression in liver. Also acts as a negative regulator of inflammation in different organs, such as, liver and pancreas. Protects against intestinal inflammation via its ability to regulate glucocorticoid production. Plays an anti-inflammatory role during the hepatic acute phase response by acting as a corepressor: inhibits the hepatic acute phase response by preventing dissociation of the N-Cor corepressor complex. Acts as a regulator of immunity by promoting lymphocyte T-cell development, proliferation and effector functions. Also involved in resolution of endoplasmic reticulum stress in the liver. In constrast to isoform 1 and isoform 2, does not induce cholesterol 7-alpha-hydroxylase gene (CYP7A) promoter activity. In terms of biological role, (Microbial infection) Plays a crucial role for hepatitis B virus gene transcription and DNA replication. Mechanistically, synergistically cooperates with HNF1A to up-regulate the activity of one of the critical cis-elements in the hepatitis B virus genome enhancer II (ENII). The chain is Nuclear receptor subfamily 5 group A member 2 from Homo sapiens (Human).